The primary structure comprises 436 residues: N-lysine methyltransferase SMYD2 (436 aa).

The 235-residue stretch at 10-244 folds into the SET domain; sequence GGLERFASPG…PGEEVFTSYI (235 aa). An S-adenosyl-L-methionine-binding site is contributed by 20-22; it reads KGR. Residues cysteine 55, cysteine 58, cysteine 68, cysteine 71, cysteine 77, cysteine 81, histidine 89, and cysteine 93 each contribute to the Zn(2+) site. An MYND-type zinc finger spans residues 55–93; sequence CDGCFARKEGLSKCGRCKQAFYCNVECQKEDWPMHKLEC. S-adenosyl-L-methionine contacts are provided by residues histidine 140, 209 to 210, and 261 to 263; these read NH and YFF.

Belongs to the class V-like SAM-binding methyltransferase superfamily.

Its subcellular location is the cytoplasm. The protein resides in the cytosol. It is found in the nucleus. The catalysed reaction is L-lysyl(4)-[histone H3] + 3 S-adenosyl-L-methionine = N(6),N(6),N(6)-trimethyl-L-lysyl(4)-[histone H3] + 3 S-adenosyl-L-homocysteine + 3 H(+). It catalyses the reaction L-lysyl-[protein] + S-adenosyl-L-methionine = N(6)-methyl-L-lysyl-[protein] + S-adenosyl-L-homocysteine + H(+). In terms of biological role, protein-lysine N-methyltransferase that methylates both histones and non-histone proteins, including p53/TP53 and RB1. Specifically trimethylates histone H3 'Lys-4' (H3K4me3) in vivo. The activity requires interaction with HSP90alpha. Shows even higher methyltransferase activity on p53/TP53. Monomethylates 'Lys-370' of p53/TP53, leading to decreased DNA-binding activity and subsequent transcriptional regulation activity of p53/TP53. Monomethylates RB1 at 'Lys-860'. The protein is N-lysine methyltransferase SMYD2 (SMYD2) of Gallus gallus (Chicken).